The primary structure comprises 417 residues: Methyltransferase/ribosomally synthesized cyclic peptide dendrothelin A precursor dbihMA (417 aa).

The tract at residues 1–251 (MESSTQTKPG…GVSTFYIPPK (251 aa)) is methyltransferase domain. Residues Arg-72, Tyr-76, and Tyr-98 contribute to the active site. Residues Tyr-98, His-100, Val-103, Ala-130, Gln-172, Ala-213, Ser-244, and Thr-245 each contribute to the S-adenosyl-L-methionine site. The tract at residues 252 to 378 (ARKDINTDII…WAIRCAMKNM (127 aa)) is clasp domain. A precursor leader region spans residues 379–399 (PSSLLEAASQSVEEASMNGFP). N-methylvaline is present on residues Val-401 and Val-403. Thr-404 carries the N-methylthreonine modification. At Gly-405 the chain carries N-methylglycine. An N-methylisoleucine modification is found at Ile-406. Val-407 bears the N-methylvaline mark. Gly-408 carries the post-translational modification N-methylglycine. The residue at position 410 (Ile-410) is an N-methylisoleucine. An N-methylglycine modification is found at Gly-411. Val-413 is modified (N-methylvaline).

It in the N-terminal section; belongs to the precorrin methyltransferase family. Homodimer. DbiMA automethylates at Val-401, Val-403, Thr-404, Gly-405, Ile-406, Val-407, Gly-408, Ile-410, Gly-411 and Val-413 before being processed by the prolyloligopeptidase dbiP which likely forms a peptidyl ester upon removal of the follower propeptide, which then undergoes macrocyclization with the N-terminus of the modified core peptide. Peptide backbone alpha-N-methylations change the physicochemical properties of amide bonds to provide structural constraints and other favorable characteristics including biological membrane permeability to peptides.

It functions in the pathway mycotoxin biosynthesis. Functionally, fusion protein of the methyltransferase dbiM and the dendrothelin core peptide; part of the gene cluster that mediates the biosynthesis of dendrothelin A, a highly methylated cyclic dodecapeptide showing slight nematodicidal activity. Dendrothelin A derives from the C-terminus of the dbiMA protein, and it is the dbiMA protein that methylates its own C-terminus using S-adenosyl methionine (SAM). The C-terminus is subsequently cleaved off and macrocyclized by the prolyloligopeptidase dbiP to give the final product. This Dendrothele bispora (strain CBS 962.96) protein is Methyltransferase/ribosomally synthesized cyclic peptide dendrothelin A precursor dbihMA.